The chain runs to 533 residues: Glucose-6-phosphate isomerase (533 aa).

E322 acts as the Proton donor in catalysis. Residues H351 and K455 contribute to the active site.

It belongs to the GPI family.

It localises to the cytoplasm. The catalysed reaction is alpha-D-glucose 6-phosphate = beta-D-fructose 6-phosphate. Its pathway is carbohydrate biosynthesis; gluconeogenesis. It participates in carbohydrate degradation; glycolysis; D-glyceraldehyde 3-phosphate and glycerone phosphate from D-glucose: step 2/4. Its function is as follows. Catalyzes the reversible isomerization of glucose-6-phosphate to fructose-6-phosphate. The polypeptide is Glucose-6-phosphate isomerase (Desulfitobacterium hafniense (strain DSM 10664 / DCB-2)).